The chain runs to 189 residues: dCTP deaminase, dUMP-forming (189 aa).

DCTP is bound by residues 101 to 106, D119, 127 to 129, Q148, Y162, K170, and Q174; these read KSSLGR and TLE. Residue E129 is the Proton donor/acceptor of the active site. Positions 163–189 are disordered; it reads GSGKLGSKYQGQRGPTPSKAYLNFPNK.

It belongs to the dCTP deaminase family. Homotrimer.

The enzyme catalyses dCTP + 2 H2O = dUMP + NH4(+) + diphosphate. It functions in the pathway pyrimidine metabolism; dUMP biosynthesis; dUMP from dCTP: step 1/1. Its function is as follows. Bifunctional enzyme that catalyzes both the deamination of dCTP to dUTP and the hydrolysis of dUTP to dUMP without releasing the toxic dUTP intermediate. This chain is dCTP deaminase, dUMP-forming, found in Corynebacterium glutamicum (strain R).